Reading from the N-terminus, the 276-residue chain is Ribosomal RNA small subunit methyltransferase A (276 aa).

6 residues coordinate S-adenosyl-L-methionine: Asn27, Leu29, Gly54, Glu75, Asp101, and Asn122.

It belongs to the class I-like SAM-binding methyltransferase superfamily. rRNA adenine N(6)-methyltransferase family. RsmA subfamily.

The protein localises to the cytoplasm. The catalysed reaction is adenosine(1518)/adenosine(1519) in 16S rRNA + 4 S-adenosyl-L-methionine = N(6)-dimethyladenosine(1518)/N(6)-dimethyladenosine(1519) in 16S rRNA + 4 S-adenosyl-L-homocysteine + 4 H(+). Specifically dimethylates two adjacent adenosines (A1518 and A1519) in the loop of a conserved hairpin near the 3'-end of 16S rRNA in the 30S particle. May play a critical role in biogenesis of 30S subunits. The polypeptide is Ribosomal RNA small subunit methyltransferase A (Brucella suis (strain ATCC 23445 / NCTC 10510)).